A 271-amino-acid polypeptide reads, in one-letter code: Urease accessory protein UreD (271 aa).

The protein belongs to the UreD family. UreD, UreF and UreG form a complex that acts as a GTP-hydrolysis-dependent molecular chaperone, activating the urease apoprotein by helping to assemble the nickel containing metallocenter of UreC. The UreE protein probably delivers the nickel.

The protein resides in the cytoplasm. In terms of biological role, required for maturation of urease via the functional incorporation of the urease nickel metallocenter. This is Urease accessory protein UreD from Bacillus sp. (strain TB-90).